A 234-amino-acid chain; its full sequence is Proteasome subunit alpha type-2 (234 aa).

This sequence belongs to the peptidase T1A family. The 26S proteasome consists of a 20S proteasome core and two 19S regulatory subunits. The 20S proteasome core is composed of 28 subunits that are arranged in four stacked rings, resulting in a barrel-shaped structure. The two end rings are each formed by seven alpha subunits, and the two central rings are each formed by seven beta subunits. The catalytic chamber with the active sites is on the inside of the barrel. Interacts with Rpn6.

Its subcellular location is the cytoplasm. The protein localises to the nucleus. Its function is as follows. The proteasome is a multicatalytic proteinase complex which is characterized by its ability to cleave peptides with Arg, Phe, Tyr, Leu, and Glu adjacent to the leaving group at neutral or slightly basic pH. The proteasome has an ATP-dependent proteolytic activity. The sequence is that of Proteasome subunit alpha type-2 (Prosalpha2) from Drosophila melanogaster (Fruit fly).